A 225-amino-acid polypeptide reads, in one-letter code: UPF0758 protein SEQ_1136 (225 aa).

The 123-residue stretch at 102–224 (PVLSSAQVAE…YYSFREKSDL (123 aa)) folds into the MPN domain. Zn(2+) contacts are provided by His173, His175, and Asp186. The JAMM motif signature appears at 173-186 (HNHPSGLTKPSAND).

The protein belongs to the UPF0758 family.

In Streptococcus equi subsp. equi (strain 4047), this protein is UPF0758 protein SEQ_1136.